Consider the following 284-residue polypeptide: 4-hydroxybenzoate octaprenyltransferase (284 aa).

The next 7 helical transmembrane spans lie at 13–32 (FNRP…ALWL), 90–110 (ALML…FTDL), 112–132 (TILL…MKRY), 134–154 (HLPQ…AYSA), 164–184 (LWML…YYAM), 200–220 (ILFG…TLSL), and 224–244 (IGLL…CVGL).

This sequence belongs to the UbiA prenyltransferase family. Requires Mg(2+) as cofactor.

It localises to the cell inner membrane. The enzyme catalyses all-trans-octaprenyl diphosphate + 4-hydroxybenzoate = 4-hydroxy-3-(all-trans-octaprenyl)benzoate + diphosphate. Its pathway is cofactor biosynthesis; ubiquinone biosynthesis. Functionally, catalyzes the prenylation of para-hydroxybenzoate (PHB) with an all-trans polyprenyl group. Mediates the second step in the final reaction sequence of ubiquinone-8 (UQ-8) biosynthesis, which is the condensation of the polyisoprenoid side chain with PHB, generating the first membrane-bound Q intermediate 3-octaprenyl-4-hydroxybenzoate. The protein is 4-hydroxybenzoate octaprenyltransferase of Marinomonas sp. (strain MWYL1).